Consider the following 218-residue polypeptide: Putative glutamine transport system permease protein GlnP (218 aa).

The ABC transmembrane type-1 domain occupies T19–A208. Transmembrane regions (helical) follow at residues Y25 to V45, F57 to P79, F86 to I108, and F187 to I207.

It belongs to the binding-protein-dependent transport system permease family. HisMQ subfamily.

The protein resides in the cell inner membrane. Its function is as follows. Part of the binding-protein-dependent transport system for glutamine; probably responsible for the translocation of the substrate across the membrane. The sequence is that of Putative glutamine transport system permease protein GlnP (glnP) from Rickettsia typhi (strain ATCC VR-144 / Wilmington).